Reading from the N-terminus, the 188-residue chain is dTTP/UTP pyrophosphatase (188 aa).

The active-site Proton acceptor is the D70.

It belongs to the Maf family. YhdE subfamily. It depends on a divalent metal cation as a cofactor.

Its subcellular location is the cytoplasm. The catalysed reaction is dTTP + H2O = dTMP + diphosphate + H(+). The enzyme catalyses UTP + H2O = UMP + diphosphate + H(+). In terms of biological role, nucleoside triphosphate pyrophosphatase that hydrolyzes dTTP and UTP. May have a dual role in cell division arrest and in preventing the incorporation of modified nucleotides into cellular nucleic acids. This is dTTP/UTP pyrophosphatase from Clostridium botulinum (strain Alaska E43 / Type E3).